The primary structure comprises 239 residues: MMTSLGNDVLRARLQSGAEVLAPGLDAAQIDRLMDFLALLQKWNRVYNLTALQDPQEMLTQHLLDSLAALAPLRRQLAHLAHLAHSTGLAGPGQGAGPRRLLDVGSGAGLPGVVFAICCPQLDVHCVDSVGKKAAFIGQVALQLRLRNLHGVHARVETLTTPFEIICCRAFAALPDFVRWTRSALRAPDGVWLALKGKHPGAEIAALPADVQVFHVERLTVPGLAAERCIVWLRPAALA.

Residues Gly-105, Leu-110, 156–157, and Arg-169 contribute to the S-adenosyl-L-methionine site; that span reads VE.

Belongs to the methyltransferase superfamily. RNA methyltransferase RsmG family.

The protein resides in the cytoplasm. The catalysed reaction is guanosine(527) in 16S rRNA + S-adenosyl-L-methionine = N(7)-methylguanosine(527) in 16S rRNA + S-adenosyl-L-homocysteine. In terms of biological role, specifically methylates the N7 position of guanine in position 527 of 16S rRNA. In Verminephrobacter eiseniae (strain EF01-2), this protein is Ribosomal RNA small subunit methyltransferase G.